The following is a 511-amino-acid chain: Bifunctional purine biosynthesis protein PurH (511 aa).

One can recognise an MGS-like domain in the interval 1–145; sequence MKRRALVSVS…KNHQHVTVVV (145 aa).

This sequence belongs to the PurH family.

It catalyses the reaction (6R)-10-formyltetrahydrofolate + 5-amino-1-(5-phospho-beta-D-ribosyl)imidazole-4-carboxamide = 5-formamido-1-(5-phospho-D-ribosyl)imidazole-4-carboxamide + (6S)-5,6,7,8-tetrahydrofolate. The catalysed reaction is IMP + H2O = 5-formamido-1-(5-phospho-D-ribosyl)imidazole-4-carboxamide. The protein operates within purine metabolism; IMP biosynthesis via de novo pathway; 5-formamido-1-(5-phospho-D-ribosyl)imidazole-4-carboxamide from 5-amino-1-(5-phospho-D-ribosyl)imidazole-4-carboxamide (10-formyl THF route): step 1/1. It participates in purine metabolism; IMP biosynthesis via de novo pathway; IMP from 5-formamido-1-(5-phospho-D-ribosyl)imidazole-4-carboxamide: step 1/1. This Halalkalibacterium halodurans (strain ATCC BAA-125 / DSM 18197 / FERM 7344 / JCM 9153 / C-125) (Bacillus halodurans) protein is Bifunctional purine biosynthesis protein PurH.